Here is a 375-residue protein sequence, read N- to C-terminus: Adiponectin receptor protein 1 (375 aa).

The segment at 1 to 60 (MSSHKGSAGAQGNGAPSGNREADTVELAELGPLLEEKGKRAASSPAKAEEDQACPVPQEE) is disordered. At 1 to 136 (MSSHKGSAGA…SIFRIHTETG (136 aa)) the chain is on the cytoplasmic side. Residues 137 to 157 (NIWTHLLGFVLFLFLGILTML) form a helical membrane-spanning segment. At 158–170 (RPNMYFMAPLQEK) the chain is on the extracellular side. The helical transmembrane segment at 171-191 (VVFGMFFLGAVLCLSFSWLFH) threads the bilayer. Histidine 191 contributes to the Zn(2+) binding site. Residues 192-203 (TVYCHSEKVSRT) lie on the Cytoplasmic side of the membrane. The helical transmembrane segment at 204–224 (FSKLDYSGIALLIMGSFVPWL) threads the bilayer. At 225–234 (YYSFYCSPQP) the chain is on the extracellular side. A helical transmembrane segment spans residues 235-255 (RLIYLSIVCVLGISAIIVAQW). Topologically, residues 256-264 (DRFATPKHR) are cytoplasmic. The chain crosses the membrane as a helical span at residues 265 to 285 (QTRAGVFLGLGLSGVVPTMHF). The Extracellular segment spans residues 286 to 298 (TIAEGFVKATTVG). A helical membrane pass occupies residues 299 to 319 (QMGWFFLMAVMYITGAGLYAA). The Cytoplasmic portion of the chain corresponds to 320–337 (RIPERFFPGKFDIWFQSH). Zn(2+)-binding residues include histidine 337 and histidine 341. A helical membrane pass occupies residues 338-358 (QIFHVLVVAAAFVHFYGVSNL). Residues 359–375 (QEFRYGLEGGCTDDSLL) lie on the Extracellular side of the membrane.

The protein belongs to the ADIPOR family. In terms of assembly, may form homooligomers and heterooligomers with ADIPOR2. Interacts with APPL2 (via BAR domain); hinders the accessibility of APPL1 to ADIPOR1; negatively regulates adiponectin signaling; ADIPOQ dissociates this interaction and facilitates the recruitment of APPL1 to ADIPOR1. Interacts with APPL1; ADIPOQ enhances this interaction; inhibites adiponectin-stimulated binding of APPL2 to ADIPOR1. Detected in brain and quadriceps muscle (at protein level). Widely expressed. Expressed in heart, kidney, liver, lung, skeletal muscle, white adipose tissue, brown adipose tissue, aorta and spleen. Weakly expressed in brain and testis.

It localises to the cell membrane. In terms of biological role, receptor for ADIPOQ, an essential hormone secreted by adipocytes that regulates glucose and lipid metabolism. Required for normal glucose and fat homeostasis and for maintaining a normal body weight. ADIPOQ-binding activates a signaling cascade that leads to increased AMPK activity, and ultimately to increased fatty acid oxidation, increased glucose uptake and decreased gluconeogenesis. Has high affinity for globular adiponectin and low affinity for full-length adiponectin. The chain is Adiponectin receptor protein 1 from Mus musculus (Mouse).